A 235-amino-acid polypeptide reads, in one-letter code: Phosphoribosylaminoimidazole-succinocarboxamide synthase (235 aa).

Belongs to the SAICAR synthetase family.

It carries out the reaction 5-amino-1-(5-phospho-D-ribosyl)imidazole-4-carboxylate + L-aspartate + ATP = (2S)-2-[5-amino-1-(5-phospho-beta-D-ribosyl)imidazole-4-carboxamido]succinate + ADP + phosphate + 2 H(+). It participates in purine metabolism; IMP biosynthesis via de novo pathway; 5-amino-1-(5-phospho-D-ribosyl)imidazole-4-carboxamide from 5-amino-1-(5-phospho-D-ribosyl)imidazole-4-carboxylate: step 1/2. The sequence is that of Phosphoribosylaminoimidazole-succinocarboxamide synthase from Nautilia profundicola (strain ATCC BAA-1463 / DSM 18972 / AmH).